We begin with the raw amino-acid sequence, 358 residues long: 3-dehydroquinate synthase (358 aa).

NAD(+)-binding positions include 70 to 75 (DGEQFK), 104 to 108 (GVIGD), 128 to 129 (TT), lysine 141, lysine 150, and 168 to 171 (CLHT). Residues glutamate 183, histidine 246, and histidine 263 each contribute to the Zn(2+) site.

It belongs to the sugar phosphate cyclases superfamily. Dehydroquinate synthase family. It depends on Co(2+) as a cofactor. Requires Zn(2+) as cofactor. NAD(+) is required as a cofactor.

The protein localises to the cytoplasm. It carries out the reaction 7-phospho-2-dehydro-3-deoxy-D-arabino-heptonate = 3-dehydroquinate + phosphate. It participates in metabolic intermediate biosynthesis; chorismate biosynthesis; chorismate from D-erythrose 4-phosphate and phosphoenolpyruvate: step 2/7. In terms of biological role, catalyzes the conversion of 3-deoxy-D-arabino-heptulosonate 7-phosphate (DAHP) to dehydroquinate (DHQ). This chain is 3-dehydroquinate synthase, found in Shewanella baltica (strain OS155 / ATCC BAA-1091).